Here is a 149-residue protein sequence, read N- to C-terminus: Lipoprotein MlpF (149 aa).

A signal peptide spans 1–17 (MKIINILFCLFLLLLNS). Cys-18 carries N-palmitoyl cysteine lipidation. Residue Cys-18 is the site of S-diacylglycerol cysteine attachment. Positions 26 to 58 (LKNNAQQTKSRGKRDLTQKEATPEKPKSKEELL) are disordered. The segment covering 38–58 (KRDLTQKEATPEKPKSKEELL) has biased composition (basic and acidic residues).

The protein belongs to the Multicopy lipoprotein (Mlp) family.

Its subcellular location is the cell outer membrane. An outer membrane protein that may participate in pathogenesis. Some human Lyme disease patients have antibodies against this protein. The Mlp proteins probably undergo intragenic recombination, generating new alleles. The sequence is that of Lipoprotein MlpF from Borreliella burgdorferi (strain ATCC 35210 / DSM 4680 / CIP 102532 / B31) (Borrelia burgdorferi).